The primary structure comprises 529 residues: Lysine--tRNA ligase (529 aa).

Positions 44–52 match the 'HIGH' region motif; sequence PSGLPHIGT. A 'KMSKS' region motif is present at residues 290–294; that stretch reads KISKS. K293 contributes to the ATP binding site.

It belongs to the class-I aminoacyl-tRNA synthetase family.

It is found in the cytoplasm. It carries out the reaction tRNA(Lys) + L-lysine + ATP = L-lysyl-tRNA(Lys) + AMP + diphosphate. The protein is Lysine--tRNA ligase of Rickettsia akari (strain Hartford).